We begin with the raw amino-acid sequence, 1404 residues long: DNA-directed RNA polymerase subunit beta' (1404 aa).

Zn(2+) is bound by residues C60, C62, C75, and C78. Residues D449, D451, and D453 each contribute to the Mg(2+) site. Zn(2+) is bound by residues C778, C852, C859, and C862. Residues D1381–E1404 are disordered. A compositionally biased stretch (acidic residues) spans L1384–E1404.

The protein belongs to the RNA polymerase beta' chain family. The RNAP catalytic core consists of 2 alpha, 1 beta, 1 beta' and 1 omega subunit. When a sigma factor is associated with the core the holoenzyme is formed, which can initiate transcription. It depends on Mg(2+) as a cofactor. The cofactor is Zn(2+).

It carries out the reaction RNA(n) + a ribonucleoside 5'-triphosphate = RNA(n+1) + diphosphate. DNA-dependent RNA polymerase catalyzes the transcription of DNA into RNA using the four ribonucleoside triphosphates as substrates. In Leptospira borgpetersenii serovar Hardjo-bovis (strain L550), this protein is DNA-directed RNA polymerase subunit beta'.